Consider the following 365-residue polypeptide: Protein RecA (365 aa).

Position 76 to 83 (76 to 83) interacts with ATP; it reads GPESSGKT. A disordered region spans residues 346–365; sequence DVPGSERDGDEDAGDMEASA. Residues 353–365 are compositionally biased toward acidic residues; that stretch reads DGDEDAGDMEASA.

Belongs to the RecA family.

Its subcellular location is the cytoplasm. In terms of biological role, can catalyze the hydrolysis of ATP in the presence of single-stranded DNA, the ATP-dependent uptake of single-stranded DNA by duplex DNA, and the ATP-dependent hybridization of homologous single-stranded DNAs. It interacts with LexA causing its activation and leading to its autocatalytic cleavage. In Parvibaculum lavamentivorans (strain DS-1 / DSM 13023 / NCIMB 13966), this protein is Protein RecA.